Consider the following 280-residue polypeptide: Mediator of RNA polymerase II transcription subunit 2 (280 aa).

Positions 212 to 247 (GLQNTSGGNEKKNDPQINFNDTNAPPSAVNVPENGN) are disordered. The span at 226-236 (PQINFNDTNAP) shows a compositional bias: polar residues.

Belongs to the Mediator complex subunit 2 family. Component of the Mediator complex.

The protein resides in the nucleus. Its function is as follows. Component of the Mediator complex, a coactivator involved in the regulated transcription of nearly all RNA polymerase II-dependent genes. Mediator functions as a bridge to convey information from gene-specific regulatory proteins to the basal RNA polymerase II transcription machinery. Mediator is recruited to promoters by direct interactions with regulatory proteins and serves as a scaffold for the assembly of a functional preinitiation complex with RNA polymerase II and the general transcription factors. This Kluyveromyces lactis (strain ATCC 8585 / CBS 2359 / DSM 70799 / NBRC 1267 / NRRL Y-1140 / WM37) (Yeast) protein is Mediator of RNA polymerase II transcription subunit 2 (MED2).